Here is a 282-residue protein sequence, read N- to C-terminus: MTDRYAVFGNPISHSKSPFIHGQFAAPTQESLTYEAILAPVDGFEASLTAFFNAGGKGANVTVPFKEQAFALCDSISPEAKLAGAVNTLSLLADGTIRGDNTDGLGLVADLIANLGSLQDKRVLLIGAGGAARGCILPLLNAGIAQLIISNRTHTKAQLLVDIFTSVDNGAFANRVTAVEMNELAGEFDIIINSTSASLVGELPPLPTHIITTQTVCYDMMYGASVTAFNQWALSQGAAKVIDGLGMLVGQAAKSFTLWRGIEPDTQVVLTLLRDKLMAEPK.

Shikimate-binding positions include 15-17 (SKS) and T62. K66 (proton acceptor) is an active-site residue. Positions 87 and 103 each coordinate shikimate. Residues 127–131 (GAGGA), 151–156 (NRTHTK), and M220 contribute to the NADP(+) site. Residue Y222 participates in shikimate binding. G244 contributes to the NADP(+) binding site.

Belongs to the shikimate dehydrogenase family. In terms of assembly, homodimer.

It carries out the reaction shikimate + NADP(+) = 3-dehydroshikimate + NADPH + H(+). It participates in metabolic intermediate biosynthesis; chorismate biosynthesis; chorismate from D-erythrose 4-phosphate and phosphoenolpyruvate: step 4/7. In terms of biological role, involved in the biosynthesis of the chorismate, which leads to the biosynthesis of aromatic amino acids. Catalyzes the reversible NADPH linked reduction of 3-dehydroshikimate (DHSA) to yield shikimate (SA). In Shewanella baltica (strain OS155 / ATCC BAA-1091), this protein is Shikimate dehydrogenase (NADP(+)).